Reading from the N-terminus, the 287-residue chain is 2-dehydro-3-deoxyphosphooctonate aldolase (287 aa).

The protein belongs to the KdsA family.

It is found in the cytoplasm. The enzyme catalyses D-arabinose 5-phosphate + phosphoenolpyruvate + H2O = 3-deoxy-alpha-D-manno-2-octulosonate-8-phosphate + phosphate. It functions in the pathway carbohydrate biosynthesis; 3-deoxy-D-manno-octulosonate biosynthesis; 3-deoxy-D-manno-octulosonate from D-ribulose 5-phosphate: step 2/3. The protein operates within bacterial outer membrane biogenesis; lipopolysaccharide biosynthesis. This chain is 2-dehydro-3-deoxyphosphooctonate aldolase, found in Magnetococcus marinus (strain ATCC BAA-1437 / JCM 17883 / MC-1).